The primary structure comprises 229 residues: Flagellar L-ring protein (229 aa).

Positions 1-23 are cleaved as a signal peptide; sequence MSPLTRIALALAASAALVLALTA. Cys-24 carries N-palmitoyl cysteine lipidation. Cys-24 carries S-diacylglycerol cysteine lipidation.

Belongs to the FlgH family. As to quaternary structure, the basal body constitutes a major portion of the flagellar organelle and consists of four rings (L,P,S, and M) mounted on a central rod.

Its subcellular location is the cell outer membrane. It is found in the bacterial flagellum basal body. Its function is as follows. Assembles around the rod to form the L-ring and probably protects the motor/basal body from shearing forces during rotation. This Anaeromyxobacter dehalogenans (strain 2CP-C) protein is Flagellar L-ring protein.